The sequence spans 384 residues: DNA dC-&gt;dU-editing enzyme APOBEC-3G (384 aa).

The segment at 1–60 is essential for cytoplasmic localization; that stretch reads MKPHFRNPVERMYQDTFSDNFYNRPILSHRNTVWLCYEVKTKGPSRPPLDAKIFRGQVYS. 2 CMP/dCMP-type deaminase domains span residues 29-138 and 214-328; these read HRNT…LRSL and GRHE…LRTL. Threonine 32 is modified (phosphothreonine; by PKA). Zn(2+) is bound by residues histidine 65, cysteine 97, and cysteine 100. Residues 209 to 336 form a necessary for homooligomerization region; the sequence is ELWVRGRHET…TLAKAGAKIS (128 aa). Positions 213-215 are interaction with DNA; the sequence is RGR. Threonine 218 is subject to Phosphothreonine; by PKA and CAMK2. Zn(2+) is bound at residue histidine 257. Glutamate 259 (proton donor) is an active-site residue. Zn(2+) is bound by residues cysteine 288 and cysteine 291. An interaction with DNA region spans residues 313-320; it reads RIYDDQGR.

The protein belongs to the cytidine and deoxycytidylate deaminase family. As to quaternary structure, homodimer. Homooligomer. Can bind RNA to form ribonucleoprotein complexes of high-molecular-mass (HMM) or low-molecular-mass (LMM). HMM is inactive and heterogeneous in protein composition because of binding nonselectively to cellular RNAs, which in turn are associated with variety of cellular proteins. The LMM form which is enzymatically active has few or no RNAs associated. Its ability to form homooligomer is distinct from its ability to assemble into HMM. Interacts with APOBEC3B, APOBEC3F, MOV10, AGO2, EIF4E, EIF4ENIF1, DCP2 and DDX6 in an RNA-dependent manner. Interacts with AGO1, AGO3 and PKA/PRKACA. It depends on Zn(2+) as a cofactor.

It is found in the cytoplasm. The protein resides in the nucleus. It localises to the P-body. The catalysed reaction is a 2'-deoxycytidine in single-stranded DNA + H2O + H(+) = a 2'-deoxyuridine in single-stranded DNA + NH4(+). Functionally, DNA deaminase (cytidine deaminase) which acts as an inhibitor of retrovirus replication and retrotransposon mobility via deaminase-dependent and -independent mechanisms. Exhibits antiviral activity against vif-deficient: HIV-1 and simian immunodeficiency viruses (SIVs) and also against simian foamy virus (SFV). After the penetration of retroviral nucleocapsids into target cells of infection and the initiation of reverse transcription, it can induce the conversion of cytosine to uracil in the minus-sense single-strand viral DNA, leading to G-to-A hypermutations in the subsequent plus-strand viral DNA. The resultant detrimental levels of mutations in the proviral genome, along with a deamination-independent mechanism that works prior to the proviral integration, together exert efficient antiretroviral effects in infected target cells. Selectively targets single-stranded DNA and does not deaminate double-stranded DNA or single- or double-stranded RNA. May inhibit the mobility of LTR retrotransposons. In Pan troglodytes (Chimpanzee), this protein is DNA dC-&gt;dU-editing enzyme APOBEC-3G (APOBEC3G).